Consider the following 441-residue polypeptide: Leucine-rich repeat-containing protein 17 (441 aa).

An N-terminal signal peptide occupies residues 1–18; sequence MRVVTIVILLCFCKAAEL. LRR repeat units follow at residues 82 to 103, 106 to 127, and 130 to 151; these read DLLHMLLARNKIRTLKNNMFSK, KLKSLDLQQNEISKIESEAFFG, and KLTTLLLQHNQIKVLTEEVFIY. The 52-residue stretch at 163–214 folds into the LRRCT 1 domain; it reads NPWHCTCEIETLISMLQIPRNRNLGNYAKCESPQEQKNKKLRQIKSEQLCNE. The 44-residue stretch at 225-268 folds into the LRRNT domain; that stretch reads QVSGRPPVIKPEVDSTFCHNYVFPIQTLDCKRKELKKVPNNIPP. 3 LRR repeats span residues 269-290, 293-314, and 317-340; these read DIVKLDLSYNKINQLRPKEFED, ELKKLNLSSNGIEFIDPAAFLG, and HLEELDLSNNSLQNFDYGVLEDLY. The region spanning 350–402 is the LRRCT 2 domain; that stretch reads NPWRCDYNIHYLYYWLKHHYNVHFNGLECKTPEEYKGWSVGKYIRSYYEECPK.

As to expression, expressed in osteoblast cell lines. Well expressed in ovary, heart, pancreas, skeletal muscle, lung, and fetal kidney and lung and only at the basal levels in the other tissues examined including adult kidney. More expressed in S-type neuroblastoma cells than in N-type neuroblastoma cells.

Its subcellular location is the secreted. The protein localises to the extracellular space. In terms of biological role, involved in bone homeostasis. Acts as a negative regulator of RANKL-induced osteoclast precursor differentiation from bone marrow precursors. The polypeptide is Leucine-rich repeat-containing protein 17 (LRRC17) (Homo sapiens (Human)).